The primary structure comprises 28 residues: Potassium channel toxin alpha-KTx 9.3 (28 aa).

3 disulfides stabilise this stretch: cysteine 3–cysteine 19, cysteine 6–cysteine 24, and cysteine 10–cysteine 26.

It belongs to the short scorpion toxin superfamily. Potassium channel inhibitor family. Alpha-KTx 09 subfamily. In terms of tissue distribution, expressed by the venom gland.

It localises to the secreted. In terms of biological role, inhibits voltage-gated potassium channels. The sequence is that of Potassium channel toxin alpha-KTx 9.3 from Aegaeobuthus nigrocinctus (Scorpion).